Consider the following 445-residue polypeptide: Plasmid recombination enzyme (445 aa).

Residues Tyr-45 and Tyr-113 each contribute to the DNA site.

Belongs to the plasmid mobilization pre family.

In Bacillus thuringiensis, this protein is Plasmid recombination enzyme.